Consider the following 203-residue polypeptide: NAD(P)H dehydrogenase (quinone) (203 aa).

A Flavodoxin-like domain is found at 7 to 194; the sequence is VLVLYHSSYG…SLARKQGAHV (188 aa). Residues 13-18 and 82-84 contribute to the FMN site; these read SSYGHI and TRF. Residue Y15 coordinates NAD(+). Position 102 (W102) interacts with substrate. Residues 117–122 and H137 each bind FMN; that span reads STGTGG.

It belongs to the WrbA family. FMN is required as a cofactor.

It catalyses the reaction a quinone + NADH + H(+) = a quinol + NAD(+). The enzyme catalyses a quinone + NADPH + H(+) = a quinol + NADP(+). This Parvibaculum lavamentivorans (strain DS-1 / DSM 13023 / NCIMB 13966) protein is NAD(P)H dehydrogenase (quinone).